The chain runs to 274 residues: Large ribosomal subunit protein uL2 (274 aa).

The disordered stretch occupies residues 223–258 (VAMNPVDHPHGGGEGRTSGGRHPVTPWGIPTKGYKT).

The protein belongs to the universal ribosomal protein uL2 family. In terms of assembly, part of the 50S ribosomal subunit. Forms a bridge to the 30S subunit in the 70S ribosome.

Its function is as follows. One of the primary rRNA binding proteins. Required for association of the 30S and 50S subunits to form the 70S ribosome, for tRNA binding and peptide bond formation. It has been suggested to have peptidyltransferase activity; this is somewhat controversial. Makes several contacts with the 16S rRNA in the 70S ribosome. The sequence is that of Large ribosomal subunit protein uL2 from Pelobacter propionicus (strain DSM 2379 / NBRC 103807 / OttBd1).